We begin with the raw amino-acid sequence, 556 residues long: Polypyrimidine tract-binding protein 1 (556 aa).

Met1 is modified (N-acetylmethionine). Ser16 carries the post-translational modification Phosphoserine. The interval 35–54 (ASAANGNDSKKFKGDNRSTG) is disordered. RRM domains lie at 58–142 (RVIH…SSPN), 183–259 (LRII…FSKL), and 362–436 (SVLL…LSKH). Lys64 is covalently cross-linked (Glycyl lysine isopeptide (Lys-Gly) (interchain with G-Cter in SUMO2)). Phosphotyrosine is present on Tyr126. Thr137 bears the Phosphothreonine mark. Phosphoserine is present on Ser140. A Glycyl lysine isopeptide (Lys-Gly) (interchain with G-Cter in SUMO2) cross-link involves residue Lys217. Positions 436–458 (HQSVQLPREGQEDQGLTKDYGSS) are disordered. A Phosphoserine modification is found at Ser458. One can recognise an RRM 4 domain in the interval 479–554 (ATLHLSNIPP…HHLRVSFSKS (76 aa)).

Monomer. Part of a ternary complex containing KHSRP, PTBP1, PTBP2 and HNRPH1. Interacts with RAVER1 and SFPQ.

The protein localises to the nucleus. Functionally, plays a role in pre-mRNA splicing and in the regulation of alternative splicing events. Activates exon skipping of its own pre-mRNA during muscle cell differentiation. Binds to the polypyrimidine tract of introns. May promote RNA looping when bound to two separate polypyrimidine tracts in the same pre-mRNA. May promote the binding of U2 snRNP to pre-mRNA. Cooperates with RAVER1 to modulate switching between mutually exclusive exons during maturation of the TPM1 pre-mRNA. Represses the splicing of MAPT/Tau exon 10. Binds to polypyrimidine-rich controlling element (PCE) of CFTR and promotes exon skipping of CFTR exon 9, thereby antagonizing TIA1 and its role in exon inclusion of CFTR exon 9. Plays a role in the splicing of pyruvate kinase PKM by binding repressively to a polypyrimidine tract flanking PKM exon 9, inhibiting exon 9 inclusion and resulting in exon 10 inclusion and production of the PKM M2 isoform. In Rattus norvegicus (Rat), this protein is Polypyrimidine tract-binding protein 1 (Ptbp1).